The primary structure comprises 337 residues: Inositol 2-dehydrogenase (337 aa).

It belongs to the Gfo/Idh/MocA family. In terms of assembly, homotetramer.

The catalysed reaction is myo-inositol + NAD(+) = scyllo-inosose + NADH + H(+). Involved in the oxidation of myo-inositol (MI) to 2-keto-myo-inositol (2KMI or 2-inosose). This is Inositol 2-dehydrogenase from Pseudarthrobacter chlorophenolicus (strain ATCC 700700 / DSM 12829 / CIP 107037 / JCM 12360 / KCTC 9906 / NCIMB 13794 / A6) (Arthrobacter chlorophenolicus).